A 504-amino-acid polypeptide reads, in one-letter code: 26S proteasome non-ATPase regulatory subunit 5 (504 aa).

N-acetylalanine is present on Ala2.

The protein belongs to the proteasome subunit S5B/HSM3 family. In terms of assembly, interacts with PSMC1, PSMC2, PSMD1 and PSMD6. Part of transient complex containing PSMD5, PSMC2, PSMC1 and PSMD2 formed during the assembly of the 26S proteasome.

In terms of biological role, acts as a chaperone during the assembly of the 26S proteasome, specifically of the base subcomplex of the PA700/19S regulatory complex (RC). In the initial step of the base subcomplex assembly is part of an intermediate PSMD5:PSMC2:PSMC1:PSMD2 module which probably assembles with a PSMD10:PSMC4:PSMC5:PAAF1 module followed by dissociation of PSMD5. The polypeptide is 26S proteasome non-ATPase regulatory subunit 5 (Psmd5) (Mus musculus (Mouse)).